A 265-amino-acid chain; its full sequence is Thymidine kinase 2, mitochondrial (265 aa).

A mitochondrion-targeting transit peptide spans 1–33 (MLLRPLRGWAALALRCFEPGSPGSPASGPGSRR). A compositionally biased stretch (low complexity) spans 21 to 31 (SPGSPASGPGS). The interval 21 to 45 (SPGSPASGPGSRRVQRGAWPSDKER) is disordered. 57–65 (GNIASGKTT) is an ATP binding site. The Proton acceptor role is filled by glutamate 133.

This sequence belongs to the DCK/DGK family. As to quaternary structure, homodimer.

The protein resides in the mitochondrion. It carries out the reaction thymidine + ATP = dTMP + ADP + H(+). The catalysed reaction is 2'-deoxycytidine + ATP = dCMP + ADP + H(+). It catalyses the reaction 2'-deoxyuridine + ATP = dUMP + ADP + H(+). Functionally, phosphorylates thymidine, deoxycytidine, and deoxyuridine in the mitochondrial matrix. In non-replicating cells, where cytosolic dNTP synthesis is down-regulated, mtDNA synthesis depends solely on TK2 and DGUOK. The polypeptide is Thymidine kinase 2, mitochondrial (TK2) (Macaca fascicularis (Crab-eating macaque)).